A 368-amino-acid polypeptide reads, in one-letter code: Spermidine/putrescine import ATP-binding protein PotA (368 aa).

The 231-residue stretch at 8-238 folds into the ABC transporter domain; sequence IELRGVTKNF…PANLYVARFV (231 aa). 40-47 lines the ATP pocket; it reads GPSGCGKT.

It belongs to the ABC transporter superfamily. Spermidine/putrescine importer (TC 3.A.1.11.1) family. In terms of assembly, the complex is composed of two ATP-binding proteins (PotA), two transmembrane proteins (PotB and PotC) and a solute-binding protein (PotD).

The protein resides in the cell inner membrane. The catalysed reaction is ATP + H2O + polyamine-[polyamine-binding protein]Side 1 = ADP + phosphate + polyamineSide 2 + [polyamine-binding protein]Side 1.. Part of the ABC transporter complex PotABCD involved in spermidine/putrescine import. Responsible for energy coupling to the transport system. In Nitratidesulfovibrio vulgaris (strain ATCC 29579 / DSM 644 / CCUG 34227 / NCIMB 8303 / VKM B-1760 / Hildenborough) (Desulfovibrio vulgaris), this protein is Spermidine/putrescine import ATP-binding protein PotA.